Reading from the N-terminus, the 447-residue chain is SNF1-related protein kinase regulatory subunit gamma-1-like (447 aa).

A2 carries the post-translational modification N-acetylalanine. S35 bears the Phosphoserine mark. 4 CBS domains span residues 54–120, 214–275, 292–350, and 374–433; these read QVPG…SAEL, SFRW…GRDW, MSPN…PEVF, and LAIP…PNYF.

Belongs to the 5'-AMP-activated protein kinase gamma subunit family. Subunit of a probable heterotrimeric complex consisting of an alpha catalytic (KIN10 or KIN11) subunit, and a beta (KINB) and a gamma (KING or SNF4) non-catalytic regulatory subunits.

In terms of biological role, regulatory subunit of the probable trimeric SNF1-related protein kinase (SnRK) complex, which may play a role in a signal transduction cascade regulating gene expression and carbohydrate metabolism in higher plants. This chain is SNF1-related protein kinase regulatory subunit gamma-1-like (CBSCBS2), found in Arabidopsis thaliana (Mouse-ear cress).